Here is a 666-residue protein sequence, read N- to C-terminus: UvrABC system protein B (666 aa).

The Helicase ATP-binding domain occupies 28–171 (NNINQGIQRQ…YLHVGELIEF (144 aa)). 41 to 48 (GATGTGKT) provides a ligand contact to ATP. A Beta-hairpin motif is present at residues 94 to 117 (YFDYYQPEAYKPITDTYIEKDSVT). A Helicase C-terminal domain is found at 436–598 (QIDDLINELM…IIPKTIIKPI (163 aa)). Positions 624–659 (NQKIKELKKKMEEAAKKREYEVAAQYRDMIVELEAI) constitute a UVR domain.

This sequence belongs to the UvrB family. In terms of assembly, forms a heterotetramer with UvrA during the search for lesions. Interacts with UvrC in an incision complex.

It is found in the cytoplasm. Its function is as follows. The UvrABC repair system catalyzes the recognition and processing of DNA lesions. A damage recognition complex composed of 2 UvrA and 2 UvrB subunits scans DNA for abnormalities. Upon binding of the UvrA(2)B(2) complex to a putative damaged site, the DNA wraps around one UvrB monomer. DNA wrap is dependent on ATP binding by UvrB and probably causes local melting of the DNA helix, facilitating insertion of UvrB beta-hairpin between the DNA strands. Then UvrB probes one DNA strand for the presence of a lesion. If a lesion is found the UvrA subunits dissociate and the UvrB-DNA preincision complex is formed. This complex is subsequently bound by UvrC and the second UvrB is released. If no lesion is found, the DNA wraps around the other UvrB subunit that will check the other stand for damage. The protein is UvrABC system protein B of Ureaplasma parvum serovar 3 (strain ATCC 27815 / 27 / NCTC 11736).